Here is a 417-residue protein sequence, read N- to C-terminus: Probable secreted beta-glucosidase PSU1 (417 aa).

The first 18 residues, 1-18 (MRFFETLALALLTTGALA), serve as a signal peptide directing secretion.

The protein belongs to the SUN family.

It localises to the secreted. The protein localises to the cell wall. In terms of biological role, involved in cell wall synthesis. May be required for the activation of 1,3-beta-glucan synthase. The sequence is that of Probable secreted beta-glucosidase PSU1 (psu1) from Schizosaccharomyces pombe (strain 972 / ATCC 24843) (Fission yeast).